Consider the following 331-residue polypeptide: UPF0194 membrane protein YbhG (331 aa).

The first 15 residues, 1 to 15, serve as a signal peptide directing secretion; sequence MKKPVVIGLAVVVLA. The stretch at 107–208 forms a coiled coil; that stretch reads EEIAQAAAAV…LNLQDSTLIA (102 aa).

It belongs to the UPF0194 family.

It localises to the periplasm. This is UPF0194 membrane protein YbhG from Escherichia coli O139:H28 (strain E24377A / ETEC).